The chain runs to 447 residues: UDP-N-acetylmuramoylalanine--D-glutamate ligase (447 aa).

Position 112 to 118 (112 to 118 (GTNGKST)) interacts with ATP.

The protein belongs to the MurCDEF family.

It is found in the cytoplasm. The enzyme catalyses UDP-N-acetyl-alpha-D-muramoyl-L-alanine + D-glutamate + ATP = UDP-N-acetyl-alpha-D-muramoyl-L-alanyl-D-glutamate + ADP + phosphate + H(+). It functions in the pathway cell wall biogenesis; peptidoglycan biosynthesis. Functionally, cell wall formation. Catalyzes the addition of glutamate to the nucleotide precursor UDP-N-acetylmuramoyl-L-alanine (UMA). The protein is UDP-N-acetylmuramoylalanine--D-glutamate ligase of Legionella pneumophila (strain Paris).